A 201-amino-acid polypeptide reads, in one-letter code: NAD(P)H dehydrogenase (quinone) (201 aa).

One can recognise a Flavodoxin-like domain in the interval 7-192; the sequence is ILVLYYSMYG…SIARYQGEYV (186 aa). FMN is bound by residues 13–18 and 81–83; these read SMYGHI and TRF. An NAD(+)-binding site is contributed by Y15. W101 lines the substrate pocket. Residues 116-121 and H136 contribute to the FMN site; that span reads STGTGG.

Belongs to the WrbA family. Requires FMN as cofactor.

The enzyme catalyses a quinone + NADH + H(+) = a quinol + NAD(+). It catalyses the reaction a quinone + NADPH + H(+) = a quinol + NADP(+). This is NAD(P)H dehydrogenase (quinone) from Shigella sonnei (strain Ss046).